The chain runs to 375 residues: MSYLFNNYKRDNIEFVDANQNELIDKDNNVYLDFSSGIGVTNLGFNMEIYQAVYNQLNLIWHSPNLYLSSIQEEVAQKLIGQRDYLAFFCNSGTEANEAAIKLARKATGKSEIIAFKKSFHGRTYGAMSATGQKKITDQFGPVVPGFKFAIFNDFNSFKSLTSNNTAAVIIEIIQGESGVLPADPLFMKQLNEYCKQKDILIIVDEVQTGIGRTGKLYAHEHYQLSPDIITLAKGLGNGLPIGAMLGKKNLGHAFGYGSHGTTFGGNRLSLAAANQTLSIINDADLLNDVQSKGQFLIENLRKSLVNKRNVIEVRGVGLMVGIEVTNDPSQVVREAKRMGLIILTAGKNVIRLLPPLTITKKQLEKGIEILTEII.

Pyridoxal 5'-phosphate-binding positions include 93-94 and F120; that span reads GT. R123 is a N(2)-acetyl-L-ornithine binding site. 205 to 208 lines the pyridoxal 5'-phosphate pocket; it reads DEVQ. Position 234 is an N6-(pyridoxal phosphate)lysine (K234). T262 is a N(2)-acetyl-L-ornithine binding site. Residue T263 coordinates pyridoxal 5'-phosphate.

Belongs to the class-III pyridoxal-phosphate-dependent aminotransferase family. ArgD subfamily. As to quaternary structure, homodimer. It depends on pyridoxal 5'-phosphate as a cofactor.

The protein resides in the cytoplasm. The catalysed reaction is N(2)-acetyl-L-ornithine + 2-oxoglutarate = N-acetyl-L-glutamate 5-semialdehyde + L-glutamate. It participates in amino-acid biosynthesis; L-arginine biosynthesis; N(2)-acetyl-L-ornithine from L-glutamate: step 4/4. The protein is Acetylornithine aminotransferase of Staphylococcus epidermidis (strain ATCC 12228 / FDA PCI 1200).